A 687-amino-acid chain; its full sequence is Mediator of RNA polymerase II transcription subunit 17 (687 aa).

The span at 30-43 (LSSNPNSSLHSPTS) shows a compositional bias: low complexity. Disordered stretches follow at residues 30–70 (LSSN…NKTK) and 130–189 (QLGS…ETDD). 3 stretches are compositionally biased toward basic and acidic residues: residues 56-70 (TSIRLEGDELENKTK), 136-147 (SDGHNSEKKDTD), and 167-183 (KDNPVDSRNETDHKTNE).

Belongs to the Mediator complex subunit 17 family. In terms of assembly, component of the Mediator complex, which is composed of at least 21 subunits that form three structurally distinct submodules. The Mediator head module contains MED6, MED8, MED11, SRB4/MED17, SRB5/MED18, ROX3/MED19, SRB2/MED20 and SRB6/MED22, the middle module contains MED1, MED4, NUT1/MED5, MED7, CSE2/MED9, NUT2/MED10, SRB7/MED21 and SOH1/MED31, and the tail module contains MED2, PGD1/MED3, RGR1/MED14, GAL11/MED15 and SIN4/MED16. The head and the middle modules interact directly with RNA polymerase II, whereas the elongated tail module interacts with gene-specific regulatory proteins. The head module may also interact with the TFIIF complex. SRB4/MED17 interacts directly with MED6, MED11, ROX3/MED19, SRB2/MED20 and SRB6/MED22. Interacts directly with the activator GAL4.

The protein localises to the nucleus. In terms of biological role, component of the Mediator complex, a coactivator involved in the regulated transcription of nearly all RNA polymerase II-dependent genes. Mediator functions as a bridge to convey information from gene-specific regulatory proteins to the basal RNA polymerase II transcription machinery. The Mediator complex, having a compact conformation in its free form, is recruited to promoters by direct interactions with regulatory proteins and serves for the assembly of a functional preinitiation complex with RNA polymerase II and the general transcription factors. The Mediator complex unfolds to an extended conformation and partially surrounds RNA polymerase II, specifically interacting with the unphosphorylated form of the C-terminal domain (CTD) of RNA polymerase II. The Mediator complex dissociates from the RNA polymerase II holoenzyme and stays at the promoter when transcriptional elongation begins. The chain is Mediator of RNA polymerase II transcription subunit 17 (SRB4) from Saccharomyces cerevisiae (strain ATCC 204508 / S288c) (Baker's yeast).